The primary structure comprises 73 residues: Small ribosomal subunit protein bS18 (73 aa).

The protein belongs to the bacterial ribosomal protein bS18 family. Part of the 30S ribosomal subunit. Forms a tight heterodimer with protein bS6.

Its function is as follows. Binds as a heterodimer with protein bS6 to the central domain of the 16S rRNA, where it helps stabilize the platform of the 30S subunit. The sequence is that of Small ribosomal subunit protein bS18 from Coxiella burnetii (strain Dugway 5J108-111).